A 232-amino-acid polypeptide reads, in one-letter code: Large ribosomal subunit protein uL3 (232 aa).

Belongs to the universal ribosomal protein uL3 family. As to quaternary structure, part of the 50S ribosomal subunit. Forms a cluster with proteins L14 and L19.

Its function is as follows. One of the primary rRNA binding proteins, it binds directly near the 3'-end of the 23S rRNA, where it nucleates assembly of the 50S subunit. The sequence is that of Large ribosomal subunit protein uL3 from Hydrogenobaculum sp. (strain Y04AAS1).